The following is a 43-amino-acid chain: Potassium channel toxin gamma-KTx 4.9 (43 aa).

4 disulfide bridges follow: C5/C23, C11/C34, C20/C39, and C24/C41.

The protein belongs to the ergtoxin family. Gamma-KTx 4 subfamily. In terms of tissue distribution, expressed by the venom gland.

The protein resides in the secreted. Reversibly blocks Kv11/ERG potassium channels. This chain is Potassium channel toxin gamma-KTx 4.9, found in Centruroides sculpturatus (Arizona bark scorpion).